The chain runs to 261 residues: MLHNITLSLVPEIITDNILIKAKEIAQFLNIPLSDRREEYPQALIWDRDGLSLCSISAKDGSHAKLLYIDFMGGKNGYRHANDCTTRQPIAKAVGIKPGFRPTVFDATAGMGGDGFVLACLGCRVTLCERSPIMYTLLQDGIERARQDSVMNKIMANLDLIHNNSKQFLENHGTNYHTIYMDPMYPHKKKSALNKKEMRVIRDLVGDDNDSDNLLETALTVAGNRVVVKRPKGAPYIEERKPHHEITMKNSRFDVYLTSYL.

Residues 129–130 and D182 each bind S-adenosyl-L-methionine; that span reads ER.

This sequence belongs to the methyltransferase superfamily. RsmJ family.

It is found in the cytoplasm. The enzyme catalyses guanosine(1516) in 16S rRNA + S-adenosyl-L-methionine = N(2)-methylguanosine(1516) in 16S rRNA + S-adenosyl-L-homocysteine + H(+). Functionally, specifically methylates the guanosine in position 1516 of 16S rRNA. This is Ribosomal RNA small subunit methyltransferase J from Desulfotalea psychrophila (strain LSv54 / DSM 12343).